A 404-amino-acid chain; its full sequence is DNA replication and repair protein RecF (404 aa).

30–37 (GSNGQGKT) serves as a coordination point for ATP.

This sequence belongs to the RecF family.

The protein localises to the cytoplasm. Its function is as follows. The RecF protein is involved in DNA metabolism; it is required for DNA replication and normal SOS inducibility. RecF binds preferentially to single-stranded, linear DNA. It also seems to bind ATP. In Clavibacter michiganensis subsp. michiganensis (strain NCPPB 382), this protein is DNA replication and repair protein RecF.